A 1137-amino-acid chain; its full sequence is Voltage-dependent calcium channel subunit alpha-2/delta-4 (1137 aa).

Positions 1–19 (MVCGCSALLPLPNPRPTMP) are cleaved as a signal peptide. Residues 20–1115 (ATPNFLANPS…AQDCGGASDT (1096 aa)) lie on the Extracellular side of the membrane. Asn201 carries an N-linked (GlcNAc...) asparagine glycan. One can recognise a VWFA domain in the interval 291 to 473 (DIVILVDVSG…ENVMEYLHVL (183 aa)). 3 residues coordinate a divalent metal cation: Asp297, Ser299, and Ser301. An MIDAS-like motif motif is present at residues 297-301 (DVSGS). Cysteines 447 and 1097 form a disulfide. A Cache domain is found at 487–580 (WTEAYMDSKL…RPLYREGKKL (94 aa)). N-linked (GlcNAc...) asparagine glycosylation occurs at Asn664. Residues 1116–1136 (SASPPLLLLPVCAWGLLPQLL) traverse the membrane as a helical segment. A topological domain (cytoplasmic) is located at residue Arg1137.

Belongs to the calcium channel subunit alpha-2/delta family. Dimer formed of alpha-2-2 and delta-2 chains; disulfide-linked. Voltage-dependent calcium channels are multisubunit complexes, consisting of alpha-1 (CACNA1), alpha-2 (CACNA2D), beta (CACNB) and delta (CACNA2D) subunits in a 1:1:1:1 ratio. Interacts with CACNA1C and CACNB3. Post-translationally, may be proteolytically processed into subunits alpha-2-4 and delta-4 that are disulfide-linked. It is however unclear whether such cleavage really takes place in vivo and has a functional role. Predominantly expressed in certain types of endocrine cells. Present in the Paneth cells of the small intestine. Also present in the erythroblasts in the fetal liver, in the cells of the zona reticularis of the adrenal gland and in the basophils of the pituitary. Present at low level in some brain regions such as the cerebellum (at protein level).

Its subcellular location is the membrane. Its function is as follows. The alpha-2/delta subunit of voltage-dependent calcium channels regulates calcium current density and activation/inactivation kinetics of the calcium channel. In Homo sapiens (Human), this protein is Voltage-dependent calcium channel subunit alpha-2/delta-4 (CACNA2D4).